The following is a 595-amino-acid chain: Laccase-18 (595 aa).

The first 29 residues, 1-29 (MEKLSTAASLFCVVVAATALAMAVVGGEA), serve as a signal peptide directing secretion. 2 Plastocyanin-like domains span residues 37–153 (MVHE…PRNG) and 162–316 (KDVP…YAGA). Asn-42 and Asn-48 each carry an N-linked (GlcNAc...) asparagine glycan. Positions 87 and 89 each coordinate Cu cation. Residue Asn-121 is glycosylated (N-linked (GlcNAc...) asparagine). 2 residues coordinate Cu cation: His-132 and His-134. 7 N-linked (GlcNAc...) asparagine glycosylation sites follow: Asn-206, Asn-345, Asn-382, Asn-402, Asn-409, Asn-439, and Asn-470. One can recognise a Plastocyanin-like 3 domain in the interval 429 to 571 (DFPVRPPRPF…ATAFIVEDGP (143 aa)). Positions 488, 491, 493, 550, 551, 552, 556, and 561 each coordinate Cu cation. Positions 570 to 595 (GPTPETSLPPPPPEFKRCGTNGLSQP) are disordered.

This sequence belongs to the multicopper oxidase family. The cofactor is Cu cation.

Its subcellular location is the secreted. It localises to the extracellular space. It is found in the apoplast. It catalyses the reaction 4 hydroquinone + O2 = 4 benzosemiquinone + 2 H2O. In terms of biological role, lignin degradation and detoxification of lignin-derived products. The sequence is that of Laccase-18 (LAC18) from Oryza sativa subsp. japonica (Rice).